A 296-amino-acid polypeptide reads, in one-letter code: GTPase Era (296 aa).

Residues 7 to 173 form the Era-type G domain; it reads KAGFVSIIGR…VDLVREHLPE (167 aa). The tract at residues 15–22 is G1; the sequence is GRPNVGKS. 15 to 22 serves as a coordination point for GTP; it reads GRPNVGKS. Positions 41-45 are G2; sequence QTTRN. The G3 stretch occupies residues 62 to 65; that stretch reads DTPG. GTP is bound by residues 62 to 66 and 122 to 125; these read DTPGI and NKID. Residues 122–125 form a G4 region; that stretch reads NKID. A G5 region spans residues 152 to 154; sequence ISA. Positions 204–281 constitute a KH type-2 domain; sequence TNREVPYGTA…YLELFVQVQE (78 aa).

The protein belongs to the TRAFAC class TrmE-Era-EngA-EngB-Septin-like GTPase superfamily. Era GTPase family. Monomer.

Its subcellular location is the cytoplasm. The protein localises to the cell inner membrane. Functionally, an essential GTPase that binds both GDP and GTP, with rapid nucleotide exchange. Plays a role in 16S rRNA processing and 30S ribosomal subunit biogenesis and possibly also in cell cycle regulation and energy metabolism. This Trichlorobacter lovleyi (strain ATCC BAA-1151 / DSM 17278 / SZ) (Geobacter lovleyi) protein is GTPase Era.